A 261-amino-acid chain; its full sequence is Cytochrome c oxidase subunit 3 (261 aa).

Residues 1-15 (MTHQTHAYHMVNPSP) are Mitochondrial matrix-facing. Residues 16-34 (WPLTGALSALLMTSGLIMW) form a helical membrane-spanning segment. At 35–40 (FHFNSM) the chain is on the mitochondrial intermembrane side. A helical membrane pass occupies residues 41–66 (YLLMLGLTTNTLTMYQWWRDIVREST). The Mitochondrial matrix segment spans residues 67–72 (FQGHHT). Residues 73–105 (PIVQKGLRYGMILFIVSEVFFFAGFFWAFYHSS) form a helical membrane-spanning segment. Topologically, residues 106-128 (LAPTPELGGCWPPTGITPLNPME) are mitochondrial intermembrane. Residues 129–152 (VPLLNTSVLLASGVSITWAHHSLM) form a helical membrane-spanning segment. The Mitochondrial matrix portion of the chain corresponds to 153 to 155 (EGN). Residues 156 to 183 (RKHMLQALFITISLGIYFTLLQASEYYE) form a helical membrane-spanning segment. At 184-190 (TPFTISD) the chain is on the mitochondrial intermembrane side. The helical transmembrane segment at 191–223 (GIYGSTFFMATGFHGLHVIIGSTFLIVCFVRQL) threads the bilayer. The Mitochondrial matrix segment spans residues 224 to 232 (KFHFTSNHH). Residues 233-256 (FGFEAAAWYWHFVDVVWLFLYVSI) traverse the membrane as a helical segment. Residues 257 to 261 (YWWGS) are Mitochondrial intermembrane-facing.

The protein belongs to the cytochrome c oxidase subunit 3 family. In terms of assembly, component of the cytochrome c oxidase (complex IV, CIV), a multisubunit enzyme composed of 14 subunits. The complex is composed of a catalytic core of 3 subunits MT-CO1, MT-CO2 and MT-CO3, encoded in the mitochondrial DNA, and 11 supernumerary subunits COX4I, COX5A, COX5B, COX6A, COX6B, COX6C, COX7A, COX7B, COX7C, COX8 and NDUFA4, which are encoded in the nuclear genome. The complex exists as a monomer or a dimer and forms supercomplexes (SCs) in the inner mitochondrial membrane with NADH-ubiquinone oxidoreductase (complex I, CI) and ubiquinol-cytochrome c oxidoreductase (cytochrome b-c1 complex, complex III, CIII), resulting in different assemblies (supercomplex SCI(1)III(2)IV(1) and megacomplex MCI(2)III(2)IV(2)).

The protein localises to the mitochondrion inner membrane. The enzyme catalyses 4 Fe(II)-[cytochrome c] + O2 + 8 H(+)(in) = 4 Fe(III)-[cytochrome c] + 2 H2O + 4 H(+)(out). Functionally, component of the cytochrome c oxidase, the last enzyme in the mitochondrial electron transport chain which drives oxidative phosphorylation. The respiratory chain contains 3 multisubunit complexes succinate dehydrogenase (complex II, CII), ubiquinol-cytochrome c oxidoreductase (cytochrome b-c1 complex, complex III, CIII) and cytochrome c oxidase (complex IV, CIV), that cooperate to transfer electrons derived from NADH and succinate to molecular oxygen, creating an electrochemical gradient over the inner membrane that drives transmembrane transport and the ATP synthase. Cytochrome c oxidase is the component of the respiratory chain that catalyzes the reduction of oxygen to water. Electrons originating from reduced cytochrome c in the intermembrane space (IMS) are transferred via the dinuclear copper A center (CU(A)) of subunit 2 and heme A of subunit 1 to the active site in subunit 1, a binuclear center (BNC) formed by heme A3 and copper B (CU(B)). The BNC reduces molecular oxygen to 2 water molecules using 4 electrons from cytochrome c in the IMS and 4 protons from the mitochondrial matrix. The protein is Cytochrome c oxidase subunit 3 (MT-CO3) of Phoca vitulina (Harbor seal).